Consider the following 115-residue polypeptide: Phosphoribosyl-AMP cyclohydrolase (115 aa).

Asp80 serves as a coordination point for Mg(2+). Position 81 (Cys81) interacts with Zn(2+). Mg(2+) contacts are provided by Asp82 and Asp84. Positions 97 and 104 each coordinate Zn(2+).

This sequence belongs to the PRA-CH family. In terms of assembly, homodimer. It depends on Mg(2+) as a cofactor. Zn(2+) is required as a cofactor.

It localises to the cytoplasm. It catalyses the reaction 1-(5-phospho-beta-D-ribosyl)-5'-AMP + H2O = 1-(5-phospho-beta-D-ribosyl)-5-[(5-phospho-beta-D-ribosylamino)methylideneamino]imidazole-4-carboxamide. It functions in the pathway amino-acid biosynthesis; L-histidine biosynthesis; L-histidine from 5-phospho-alpha-D-ribose 1-diphosphate: step 3/9. Functionally, catalyzes the hydrolysis of the adenine ring of phosphoribosyl-AMP. The chain is Phosphoribosyl-AMP cyclohydrolase from Mycolicibacterium smegmatis (strain ATCC 700084 / mc(2)155) (Mycobacterium smegmatis).